Here is a 472-residue protein sequence, read N- to C-terminus: Ras-GEF domain-containing family member 1B (472 aa).

In terms of domain architecture, N-terminal Ras-GEF spans 34-164 (HDNNLLSGSL…MMQCLIRKLA (131 aa)). A Ras-GEF domain is found at 204 to 452 (DPYTLAQQLT…YLASYESEGP (249 aa)).

In terms of assembly, interacts with CCDC124 during cytokinesis. Interacts with Ras family proteins.

It is found in the early endosome. Its subcellular location is the late endosome. The protein resides in the midbody. Its function is as follows. Guanine nucleotide exchange factor (GEF) with specificity for RAP2A, it doesn't seems to activate other Ras family proteins (in vitro). This chain is Ras-GEF domain-containing family member 1B (RASGEF1B), found in Pongo abelii (Sumatran orangutan).